The following is a 278-amino-acid chain: Replication protein A 32 kDa subunit B (278 aa).

Positions 70 to 143 form a DNA-binding region, OB; that stretch reads VVIVGRISRM…RSVNVFSVRP (74 aa).

It belongs to the replication factor A protein 2 family. Heterotrimer of RPA1, RPA2 and RPA3 (canonical replication protein A complex). Post-translationally, phosphorylated in a cell-cycle-dependent manner (from the S phase until mitosis). In response to DNA damage, recruited to DNA-repair nuclear foci, as a hypophosphorylated form.

The protein resides in the nucleus. Component of the replication protein A complex (RPA) required for DNA recombination, repair and replication. The activity of RPA is mediated by single-stranded DNA binding and protein interactions. Required fo cell division in meristems. Involved in the maintenance of transcriptional epigenetic gene silencing (TGS) at specific loci (including some transposons) by regulating histone H3 acetylation, 'Lys-4' and 'Lys-9' methylation. In Arabidopsis thaliana (Mouse-ear cress), this protein is Replication protein A 32 kDa subunit B (RPA2B).